Consider the following 180-residue polypeptide: Large ribosomal subunit protein uL22 (180 aa).

Disordered regions lie at residues 1 to 20 and 160 to 180; these read MTKP…CKSR and PKPA…EISA. Polar residues predominate over residues 8-20; the sequence is KTPSNPEKSCKSR.

Belongs to the universal ribosomal protein uL22 family.

The protein is Large ribosomal subunit protein uL22 (rpl17) of Dictyostelium discoideum (Social amoeba).